A 121-amino-acid chain; its full sequence is Large ribosomal subunit protein bL20 (121 aa).

Belongs to the bacterial ribosomal protein bL20 family.

Functionally, binds directly to 23S ribosomal RNA and is necessary for the in vitro assembly process of the 50S ribosomal subunit. It is not involved in the protein synthesizing functions of that subunit. The polypeptide is Large ribosomal subunit protein bL20 (Chlamydia felis (strain Fe/C-56) (Chlamydophila felis)).